Reading from the N-terminus, the 86-residue chain is Small ribosomal subunit protein uS17 (86 aa).

This sequence belongs to the universal ribosomal protein uS17 family. Part of the 30S ribosomal subunit.

One of the primary rRNA binding proteins, it binds specifically to the 5'-end of 16S ribosomal RNA. In Rhizorhabdus wittichii (strain DSM 6014 / CCUG 31198 / JCM 15750 / NBRC 105917 / EY 4224 / RW1) (Sphingomonas wittichii), this protein is Small ribosomal subunit protein uS17.